Consider the following 229-residue polypeptide: tRNA (guanine-N(7)-)-methyltransferase (229 aa).

Positions 62, 87, 114, and 137 each coordinate S-adenosyl-L-methionine. Aspartate 137 is a catalytic residue. Residue lysine 141 coordinates substrate. The tract at residues 143-148 (KHNKRR) is interaction with RNA. Substrate-binding positions include aspartate 173 and 208-211 (TKFE).

This sequence belongs to the class I-like SAM-binding methyltransferase superfamily. TrmB family.

It carries out the reaction guanosine(46) in tRNA + S-adenosyl-L-methionine = N(7)-methylguanosine(46) in tRNA + S-adenosyl-L-homocysteine. Its pathway is tRNA modification; N(7)-methylguanine-tRNA biosynthesis. Its function is as follows. Catalyzes the formation of N(7)-methylguanine at position 46 (m7G46) in tRNA. This is tRNA (guanine-N(7)-)-methyltransferase from Francisella philomiragia subsp. philomiragia (strain ATCC 25017 / CCUG 19701 / FSC 153 / O#319-036).